Consider the following 206-residue polypeptide: High frequency lysogenization protein HflD homolog (206 aa).

This sequence belongs to the HflD family.

It is found in the cytoplasm. It localises to the cell inner membrane. The sequence is that of High frequency lysogenization protein HflD homolog from Idiomarina loihiensis (strain ATCC BAA-735 / DSM 15497 / L2-TR).